The chain runs to 94 residues: Small ribosomal subunit protein uS19 (94 aa).

It belongs to the universal ribosomal protein uS19 family.

In terms of biological role, protein S19 forms a complex with S13 that binds strongly to the 16S ribosomal RNA. In Clostridium botulinum (strain Langeland / NCTC 10281 / Type F), this protein is Small ribosomal subunit protein uS19.